A 601-amino-acid polypeptide reads, in one-letter code: Glutathione-regulated potassium-efflux system protein KefB (601 aa).

The next 13 membrane-spanning stretches (helical) occupy residues 4-24, 29-49, 55-75, 87-107, 111-131, 152-172, 177-197, 207-227, 230-250, 262-282, 284-304, 324-344, and 356-376; these read ADLL…VPLA, IGAV…GLGF, EILH…GLEL, IFGV…GLLM, FLWQ…TAMA, VLLF…LLAG, HFDW…LIGG, FIAA…LVLS, LFMD…GVLL, AIDP…GMSL, LGVL…LVVI, MQFA…FSTA, and ALLL…MKGI. The 120-residue stretch at 400 to 519 folds into the RCK N-terminal domain; the sequence is KPQVIVVGFG…AGVTQFSRET (120 aa).

It belongs to the monovalent cation:proton antiporter 2 (CPA2) transporter (TC 2.A.37) family. KefB subfamily. In terms of assembly, interacts with the regulatory subunit KefG.

It is found in the cell inner membrane. Its function is as follows. Pore-forming subunit of a potassium efflux system that confers protection against electrophiles. Catalyzes K(+)/H(+) antiport. This chain is Glutathione-regulated potassium-efflux system protein KefB, found in Salmonella enteritidis PT4 (strain P125109).